The primary structure comprises 305 residues: Glutaminase 2 (305 aa).

7 residues coordinate substrate: serine 61, asparagine 113, glutamate 158, asparagine 165, tyrosine 189, tyrosine 241, and valine 259.

This sequence belongs to the glutaminase family. As to quaternary structure, homotetramer.

The enzyme catalyses L-glutamine + H2O = L-glutamate + NH4(+). In Clostridium perfringens (strain 13 / Type A), this protein is Glutaminase 2.